Reading from the N-terminus, the 236-residue chain is MSIFVELKSKLDQAITGVNRYNPNNVETLESCIEAMVQENQYDKDILVTTLKLYQLNPDKYNESVVKLILLKTMMMAPKSDYALAKYLIDSSRVGSPELKRIFDIGALLESCNFAVFWRLMRGDYRPLDDVNEPFRQPGEIPKIIKAVPGFEESVRNYACQVINVTFQNIEKSLLVRLLGGVSDKQVNEYARYYGWIPKENGEVYFVQNHEATIKSRNIEEKLQFDILFSLIAENV.

The PCI domain occupies 42–222 (YDKDILVTTL…TIKSRNIEEK (181 aa)).

It belongs to the eIF-3 subunit K family. As to quaternary structure, component of the eukaryotic translation initiation factor 3 (eIF-3) complex.

The protein localises to the cytoplasm. Functionally, component of the eukaryotic translation initiation factor 3 (eIF-3) complex, which is involved in protein synthesis of a specialized repertoire of mRNAs and, together with other initiation factors, stimulates binding of mRNA and methionyl-tRNAi to the 40S ribosome. The eIF-3 complex specifically targets and initiates translation of a subset of mRNAs involved in cell proliferation. This chain is Eukaryotic translation initiation factor 3 subunit K, found in Brugia malayi (Filarial nematode worm).